The following is a 798-amino-acid chain: MEEPTTSELKLSDNVMNEISDMCITEYCKPNMSLMAQINELFPTEQSLTQLDSIIASVEGEIGELDNELAYLVETNANVSERGEEALKHAQDAMIELEKSIGSIRERTKSSDEIVREMTRDIKQLDIAKRNLTASITTLHHLHILLTGVESLGAWVDKKDYSSIARQLPAILNVLQLFDAYKESDQIANLSGQLDKLKASLTIQLAKDLKNAFQTGQLSDRITDMCRVAAALEGNVKENFVKWFIEQQLSEYVIIYADNEEGAWLDKVDDRYKWFVRKLTDFERAGLSNIFPADWHMGRRLTSEFCTVTRDILYRIMTRRRQDLDWKLLGHAIQHTKMFEALLTKRFPEKDGISFEKAIWSVFDTFLDVFINAQEKTLNEFLDTCASKIRSGEEKPSRESSTHAVPFPSSADMFLLLKKVITESSKLSSEPDALIRDVIGVVRVCLRGYATSCLVAFLPSLGSQQSGAANLFSLIREEIAYPRLTPDQQFLVCCILATADWCAETSIQLQEKLSQRIPGVDISQETEAFYSITNQSLQVLVQDVESTCDAALQSISKVNWTAVDCVGDESPFIGSMRAHLRQAVPLIRDMLSDRRKYFAHFCLKLATQLAHKFVGSLFRCRTISTHGAEQLLLDTHSLKTFLLSVPSIDSIINSKPPTAYVTSVNAALTKAEMILKVVMCSLETVDEFVEQYIKLLPASDAAEMQKVLEMKGVKRQEHSAVLNAYRLKIGASGSDPIQQSNSLTSRIGGALPTVGSAASVSEAFNAVVSMAADGLSDQAVTSSIDKLKRFERLVKRQL.

It belongs to the VPS53 family. In terms of assembly, component of the Golgi-associated retrograde protein (GARP) complex, also called VFT (VPS fifty-three) complex, composed of vps-51, vps-52, vps-53 and vps-54. Within the complex interacts with vps-51, vps-52 and vps-54. In terms of tissue distribution, ubiquitously expressed, with particularly strong expression in neuronal cells. Specifically expressed in head and tail neurons and in the pharynx and ventral cord motor neurons.

Its subcellular location is the golgi apparatus. It is found in the trans-Golgi network membrane. The protein resides in the endosome membrane. The protein localises to the perikaryon. It localises to the cytoplasm. Its subcellular location is the perinuclear region. Acts as a component of the GARP complex that is involved in retrograde transport from early and late endosomes to the trans-Golgi network (TGN). The GARP complex facilitates tethering as well as SNARE complex assembly at the Golgi. Plays a role in the trafficking of cargo to dense-core vesicles, probably through association with the EARP-interacting protein eipr-1. Important for neuronal function. The protein is Vacuolar protein sorting-associated protein 53 homolog of Caenorhabditis elegans.